A 243-amino-acid chain; its full sequence is Probable phosphatase CBO3379/CLC_3322 (243 aa).

Zn(2+) is bound by residues histidine 8, histidine 10, histidine 16, histidine 41, glutamate 74, histidine 102, histidine 132, aspartate 192, and histidine 194.

It belongs to the PHP family. It depends on Zn(2+) as a cofactor.

This Clostridium botulinum (strain Hall / ATCC 3502 / NCTC 13319 / Type A) protein is Probable phosphatase CBO3379/CLC_3322.